We begin with the raw amino-acid sequence, 632 residues long: ATP-dependent zinc metalloprotease FtsH (632 aa).

The Cytoplasmic segment spans residues 1–9 (MKPTNEPKK). Residues 10 to 30 (PFFQSPIILAVLGGILLIFFL) form a helical membrane-spanning segment. Residues 31-116 (RSFNSDGSFS…INYSGFSESN (86 aa)) are Periplasmic-facing. A helical transmembrane segment spans residues 117-137 (FFTDMLGWLMPILVILGLWMF). The Cytoplasmic segment spans residues 138-632 (MANRMQKNMG…RLIPLEEQAS (495 aa)). ATP is bound by residues Ala173, 213-217 (GTGKT), and His354. His434 contacts Zn(2+). Glu435 is an active-site residue. Zn(2+) contacts are provided by His438 and Asp511.

In the central section; belongs to the AAA ATPase family. It in the C-terminal section; belongs to the peptidase M41 family. In terms of assembly, homohexamer. Zn(2+) is required as a cofactor.

The protein localises to the cell inner membrane. Functionally, acts as a processive, ATP-dependent zinc metallopeptidase for both cytoplasmic and membrane proteins. Plays a role in the quality control of integral membrane proteins. In Helicobacter pylori (strain ATCC 700392 / 26695) (Campylobacter pylori), this protein is ATP-dependent zinc metalloprotease FtsH.